Consider the following 475-residue polypeptide: Ankyrin repeat, SAM and basic leucine zipper domain-containing protein 1 (475 aa).

Residues 1-24 form a disordered region; the sequence is MAAGTVRGLAVAGGGESSESEDDG. 3 positions are modified to phosphoserine: serine 17, serine 18, and serine 20. ANK repeat units lie at residues 45 to 74, 78 to 107, 110 to 144, 148 to 177, 181 to 210, and 214 to 243; these read EKNE…SVDS, YGWT…NASF, DKQT…DPNV, RLMT…EVNA, NGYT…NKML, and DGKT…PLEG. The region spanning 272–334 is the SAM domain; that stretch reads SYTAFGDLEI…KILAALKELE (63 aa).

As to quaternary structure, interacts with DDX4, PIWIL1, RANBP9 and TDRD1.

The protein resides in the cytoplasm. Functionally, plays a central role during spermatogenesis by repressing transposable elements and preventing their mobilization, which is essential for the germline integrity. Acts via the piRNA metabolic process, which mediates the repression of transposable elements during meiosis by forming complexes composed of piRNAs and Piwi proteins and governs the methylation and subsequent repression of transposons. Its association with pi-bodies suggests a participation in the primary piRNAs metabolic process. Required prior to the pachytene stage to facilitate the production of multiple types of piRNAs, including those associated with repeats involved in the regulation of retrotransposons. May act by mediating protein-protein interactions during germ cell maturation. The chain is Ankyrin repeat, SAM and basic leucine zipper domain-containing protein 1 (ASZ1) from Neofelis nebulosa (Clouded leopard).